The primary structure comprises 197 residues: Presequence translocated-associated motor subunit PAM17, mitochondrial (197 aa).

The transit peptide at 1–14 directs the protein to the mitochondrion; the sequence is MFTSAIRLSSQRLF. Helical transmembrane passes span 64–84 and 103–123; these read INVGSSLFTALLGCNVSWAYL and VISAGIIASGALGYLLGPIVG.

Belongs to the PAM17 family. Component of the PAM complex, at least composed of mtHsp70, MGE1, TIM44, PAM16, PAM17 and PAM18/TIM14.

It is found in the mitochondrion inner membrane. Its function is as follows. Component of the PAM complex, a complex required for the translocation of transit peptide-containing proteins from the inner membrane into the mitochondrial matrix in an ATP-dependent manner. In the complex, it is required to organize PAM16-PAM18 (TIM16-TIM14) heterodimer. In Saccharomyces cerevisiae (strain ATCC 204508 / S288c) (Baker's yeast), this protein is Presequence translocated-associated motor subunit PAM17, mitochondrial (PAM17).